Here is an 81-residue protein sequence, read N- to C-terminus: U-poneritoxin(01)-Om2a (81 aa).

The N-terminal stretch at 1–25 (MKPSGITFAFLVVFMMAIMYNSVQA) is a signal peptide. Residues 26-47 (AAIADADADAEAKAFADAFAEA) constitute a propeptide that is removed on maturation.

The protein belongs to the formicidae venom precursor-01 superfamily. Post-translationally, truncated sequences of this peptide have also been found in the venom. It is possible they have been cleaved in the venom. As to expression, expressed by the venom gland.

The protein localises to the secreted. Cationic amphipathic alpha-helical peptide with antimicrobial activities against E.coli (MIC=6.2 uM), S.aureus (MIC=6.2 uM), and S.cerevisiae (MIC=50 uM). Also shows histamine-releasing activity (30.1% at 10 uM) and a weak hemolytic activity (10.4% at 50 uM). This Odontomachus monticola (Trap-jaw ant) protein is U-poneritoxin(01)-Om2a.